The following is a 1163-amino-acid chain: Hamartin (1163 aa).

Lys30 is covalently cross-linked (Glycyl lysine isopeptide (Lys-Gly) (interchain with G-Cter in ubiquitin)). Polar residues predominate over residues 295–316 (SSYVDTQNSYGGATSTPSSTSR). Disordered stretches follow at residues 295 to 337 (SSYV…STRP) and 353 to 594 (CGMT…QRGV). The segment covering 321 to 337 (STPGQLPQSLSSLSTRP) has biased composition (low complexity). Residues 393–402 (TSPPPAPPCP) show a composition bias toward pro residues. Positions 403–787 (QDDCAHGPAS…QIRQLQHDRE (385 aa)) are mediates interaction with WDR45B. Positions 474–487 (EKDKEEAAISKELS) are enriched in basic and acidic residues. 6 positions are modified to phosphoserine: Ser487, Ser505, Ser511, Ser521, Ser595, and Ser598. The segment covering 512 to 530 (LSGSQRKTHSAASGTQGFS) has biased composition (polar residues). 2 coiled-coil regions span residues 721–919 (RKVI…LAKK) and 970–994 (EKDGRLQKLEEDRAEAAEAAEERLD). Basic and acidic residues predominate over residues 1008-1020 (NEEAAGHNGETRT). Residues 1008 to 1163 (NEEAAGHNGE…DYNETHHEHS (156 aa)) form a disordered region. The span at 1029–1046 (SCGGRVTGGSSSSSSELS) shows a compositional bias: low complexity. A compositionally biased stretch (polar residues) spans 1066 to 1083 (EPSSSIPTTVGSLPSSKS). Over residues 1088–1099 (KTRELFRNKSES) the composition is skewed to basic and acidic residues. A Phosphoserine modification is found at Ser1097. Positions 1131-1146 (PPSLDAPHPSSPSSDS) are enriched in low complexity. Residues 1154-1163 (DYNETHHEHS) show a composition bias toward basic and acidic residues.

In terms of assembly, component of the TSC-TBC complex (also named Rhebulator complex), composed of 2 molecules of TSC1, 2 molecules of TSC2 and 1 molecule of TBC1D7. Probably forms a complex composed of chaperones HSP90 and HSP70, co-chaperones STIP1/HOP, CDC37, PPP5C, PTGES3/p23, TSC1 and client protein TSC2. Forms a complex composed of chaperones HSP90 and HSP70, co-chaperones CDC37, PPP5C, TSC1 and client protein TSC2, CDK4, AKT, RAF1 and NR3C1; this complex does not contain co-chaperones STIP1/HOP and PTGES3/p23. Forms a complex containing HSP90AA1, TSC1 and TSC2; TSC1 is required to recruit TCS2 to the complex. Interacts (via C-terminus) with the closed form of HSP90AA1 (via the middle domain and TPR repeat-binding motif). Interacts with DOCK7. Interacts with FBXW5. Interacts with WDR45B. Interacts with RPAP3 and URI1. Phosphorylation at Ser-505 does not affect interaction with TSC2. Post-translationally, 'Lys-63'-linked ubiquitinated at Lys-30 by PELI1; the ubiquitination promotes TSC1/TSC2 complex stability. In terms of tissue distribution, highly expressed in brain, spleen and kidney, followed by liver and heart.

It is found in the lysosome membrane. The protein resides in the cytoplasm. It localises to the cytosol. Its function is as follows. Non-catalytic component of the TSC-TBC complex, a multiprotein complex that acts as a negative regulator of the canonical mTORC1 complex, an evolutionarily conserved central nutrient sensor that stimulates anabolic reactions and macromolecule biosynthesis to promote cellular biomass generation and growth. The TSC-TBC complex acts as a GTPase-activating protein (GAP) for the small GTPase RHEB, a direct activator of the protein kinase activity of mTORC1. In absence of nutrients, the TSC-TBC complex inhibits mTORC1, thereby preventing phosphorylation of ribosomal protein S6 kinase (RPS6KB1 and RPS6KB2) and EIF4EBP1 (4E-BP1) by the mTORC1 signaling. The TSC-TBC complex is inactivated in response to nutrients, relieving inhibition of mTORC1. Within the TSC-TBC complex, TSC1 stabilizes TSC2 and prevents TSC2 self-aggregation. Involved in microtubule-mediated protein transport via its ability to regulate mTORC1 signaling. Also acts as a co-chaperone for HSP90AA1 facilitating HSP90AA1 chaperoning of protein clients such as kinases, TSC2 and glucocorticoid receptor NR3C1. Increases ATP binding to HSP90AA1 and inhibits HSP90AA1 ATPase activity. Competes with the activating co-chaperone AHSA1 for binding to HSP90AA1, thereby providing a reciprocal regulatory mechanism for chaperoning of client proteins. Recruits TSC2 to HSP90AA1 and stabilizes TSC2 by preventing the interaction between TSC2 and ubiquitin ligase HERC1. The chain is Hamartin from Rattus norvegicus (Rat).